The sequence spans 320 residues: Cytochrome f (320 aa).

Positions 1–35 (MQTRNTFFWIKEQMTRSISVSIIVYVITQTSISNA) are cleaved as a signal peptide. Residues tyrosine 36, cysteine 56, cysteine 59, and histidine 60 each contribute to the heme site. The chain crosses the membrane as a helical span at residues 286-306 (VQGLLFFFASVILAQIFLVLK).

The protein belongs to the cytochrome f family. The 4 large subunits of the cytochrome b6-f complex are cytochrome b6, subunit IV (17 kDa polypeptide, petD), cytochrome f and the Rieske protein, while the 4 small subunits are PetG, PetL, PetM and PetN. The complex functions as a dimer. Heme is required as a cofactor.

Its subcellular location is the plastid. The protein resides in the chloroplast thylakoid membrane. Component of the cytochrome b6-f complex, which mediates electron transfer between photosystem II (PSII) and photosystem I (PSI), cyclic electron flow around PSI, and state transitions. The protein is Cytochrome f of Buxus microphylla (Littleleaf boxwood).